A 2202-amino-acid polypeptide reads, in one-letter code: MNLTLTTTSITIQPSATMANRAPTLLDHFHDQLQKHSSSVAIEDGTQSADQGAWERVTYAQLDALSDSWSKRLRQAGVGAGCIVPLLSKRSVAMVAATLAILKLRAAYVSIDIDSWGKDRIDTVLKTVNPQIIVSTSPCPKDHYPYPVVALERNDFDETVTSNGTQWTRNDEDSIDRGNDLAYIIFTSGTTGIPKGVKIGQRSISRYVKEGGDLPFNFNTTHGTRVLLICSIAFDVCAGVMFNTLCNGGTLVLADPSTFETAAKTCHVLPLTPSILVTLDPKAGFDTVEKIFLGGESPSPSLIEAWSSPRRRLYNAYGPTETTCTAFMGELLPGSPITIGYPISYSTVTLLDEDGMESVEGEICIAGLGLALGYFHDPERTNSAFVEWNGVRIYKTGDYGRRTKHGLQFCGRRDSVVKNRGFLINLEADVEPALLSYDKVDSASAFMSQGQLIAFVTPTSAKEGLREYLANTVSSFLVPDTIYSLDEFPRTSNGKVDRRSLMRMHELEQGSDTASLERGLGAVESVRRGLSHVLRLPESQILPASSFRHLGGHSLAAVMLVSVLRRMGFGISVAEVLLLDTVENIAAAVVELSDIPHALSAQEDLIERLRHDISTTRPLDEGVTIAPMTDMQTRLLGASVATPGLSFIKTSFTLDHPEKEDLTSTLRAAWVRLHQTHEILRTAFVLTASNGTQIISQEPDFSWKEKFVTESEWESVCRREEHLDVADFPDFDAENRASLSRVVLIIAPRRRTRFVWTVHHSLIDGWSMATLMRDFASCLDGKPIPAPPQFAQVAQAIGQLKAESSDRAVSFWKEYLDGYTPAQRLRVSPPSDVSDYTQAALSRKLTVSVSALEDAARDRFAVTPATLLYAAWGLLLSRYSGTDRAALGAVLSGRSLPIPGVENIIGPLINTLPLAINTQEAQSTYSFVQSVFRRLCDILEFQWSPVALIQEGCGCNPSELFETLFALQYDFPQTPWKSSEVPEPRDIRYEEATQVPLTVLLDNANGQFEVRFIYRRSHFGDATVQRMIGQFGNLLENLIAAQPDTDLSNVTGQMFNNRVYEMSIAKPGQPVSACKVPESLTEAIENSIQAHPDIYAVEGLTGRLTYREFGRMTEHISQRLLQHIQPGSVACMISDGSLLWLLAMVAIIRAGAIYCPVDEKLPRDRKDYMVRNSRAALILYANSSQEPLCNGVPSLNMESIMQEISSSSGSPIATSRNRPSGDTVACLVYTSGSTGLPKAVQLQHKGILNVISQPEGRLYSRPGQRNAQMLSLGFDCCIKEVFSTICFGATLVLKDPENPISHLARVDATMATPSLLATLEPTDYPNLKVITVAGEAVSQVLNDKWAAGRTLINGYGPAECTLISTTAILHPGNRVSIGKPLPGLSCYLLDSNKRPVPMGVSGEIYISGVQVTPGYLHNEQETSKRFLSDSFNPGQVMYRTGDIGRMLEDGNIEYIGREDNQIKLRGFRIDLGEVQSTISKLASTASNVALIVSNGNLVAFMTPETIDVRSLAKSLETQLPQYAVPNRIIALATLPTSANNKVDSSALQRYLRDHGKDGAVVEDLETDTQRVLAVIWADMLGRDLNQTPISPSDRFFELGGHSLLQIKVAQAISKRWNIRPLPLKQVIRHHSLQDLSLAIDELVSDPRTVSTMPFLEMTPVARNGQLPLSYLEKEMLLNHLISGGSPAGNMNFVCKIRGDINAETLADAFQRVTADVEVFRTRYSVIEGTLFRQQAPGSVKVPRVVQTGNLSSFVHGRITKSFDLSTEPPVDVSIIIGTPMQAMLVVVMSHVVGDAATMATYLNRVSRTYDLLRSNSQTTNTSTVPDNLTYIDWAHWASTLQPNPRALTFWSSYLSNPPSPLTFGNPSPAPATYIGLTRSWTLPPSMYRKLSDLAAKASVTMHQLILAAVFFSLQCVDRRDDILVAAPFTHRTEPGTESLPGLFLDRLLLRIQRSPHQSSIFDFLSSVRETSQQALAHVIPFHTLRHSLAHKPSLIDPLFKVMVTYHTAADQRPLLDLSGAEVQPIPWRHTGGSKFPLKFEFTEMATQDLEVDMEYDLGCIREDIALRLEFALSFALQLMVLERETDDIIQLVQMSFCPGEGSPVGLTPSHEGSAELTNGTNKTDSTTGQQELENNLTDVVCECLGLEIQDVDADKSFWDLGAQSMDALKLQHLCEKRGVRVRLRDIFVSRSLLELATCAVII.

An adenylation 1 region spans residues 58-443; it reads TYAQLDALSD…LLSYDKVDSA (386 aa). In terms of domain architecture, Carrier 1 spans 517 to 593; that stretch reads ERGLGAVESV…NIAAAVVELS (77 aa). Ser-554 is subject to O-(pantetheine 4'-phosphoryl)serine. The interval 625–918 is condensation 1; it reads IAPMTDMQTR…INTLPLAINT (294 aa). The segment at 1105–1482 is adenylation 2; the sequence is TYREFGRMTE…EVQSTISKLA (378 aa). One can recognise a Carrier 2 domain in the interval 1563-1643; sequence DLETDTQRVL…DLSLAIDELV (81 aa). Ser-1602 carries the O-(pantetheine 4'-phosphoryl)serine modification. A condensation 2 region spans residues 1664–1952; the sequence is GQLPLSYLEK…FLDRLLLRIQ (289 aa). The disordered stretch occupies residues 2103–2129; sequence PVGLTPSHEGSAELTNGTNKTDSTTGQ. Residues 2115–2129 show a composition bias toward polar residues; that stretch reads ELTNGTNKTDSTTGQ. The 73-residue stretch at 2130–2202 folds into the Carrier 3 domain; that stretch reads QELENNLTDV…LELATCAVII (73 aa). An O-(pantetheine 4'-phosphoryl)serine modification is found at Ser-2164.

Belongs to the NRP synthetase family.

Functionally, nonribosomal peptide synthesis (NRPS) is a key mechanism responsible for the biosynthesis of bioactive metabolites which are potentially contributing to organismal virulence. This chain is Nonribosomal peptide synthetase 5 (NRPS5), found in Aspergillus fumigatus (strain ATCC MYA-4609 / CBS 101355 / FGSC A1100 / Af293) (Neosartorya fumigata).